Reading from the N-terminus, the 251-residue chain is Triosephosphate isomerase (251 aa).

A substrate-binding site is contributed by 10–12 (NWK). H95 serves as the catalytic Electrophile. The Proton acceptor role is filled by E167. Substrate is bound by residues G173, S213, and 234–235 (GG).

The protein belongs to the triosephosphate isomerase family. In terms of assembly, homodimer.

It localises to the cytoplasm. It carries out the reaction D-glyceraldehyde 3-phosphate = dihydroxyacetone phosphate. The protein operates within carbohydrate biosynthesis; gluconeogenesis. It functions in the pathway carbohydrate degradation; glycolysis; D-glyceraldehyde 3-phosphate from glycerone phosphate: step 1/1. In terms of biological role, involved in the gluconeogenesis. Catalyzes stereospecifically the conversion of dihydroxyacetone phosphate (DHAP) to D-glyceraldehyde-3-phosphate (G3P). The polypeptide is Triosephosphate isomerase (Acetivibrio thermocellus (strain ATCC 27405 / DSM 1237 / JCM 9322 / NBRC 103400 / NCIMB 10682 / NRRL B-4536 / VPI 7372) (Clostridium thermocellum)).